Here is a 394-residue protein sequence, read N- to C-terminus: Small ribosomal subunit protein uS2m (394 aa).

Residues 1–25 (MQRHVFARNFRRLSLLRNPSLTKRF) constitute a mitochondrion transit peptide.

It belongs to the universal ribosomal protein uS2 family. Component of the mitochondrial small ribosomal subunit (mt-SSU). Mature yeast 74S mitochondrial ribosomes consist of a small (37S) and a large (54S) subunit. The 37S small subunit contains a 15S ribosomal RNA (15S mt-rRNA) and 34 different proteins. The 54S large subunit contains a 21S rRNA (21S mt-rRNA) and 46 different proteins.

It is found in the mitochondrion. Functionally, component of the mitochondrial ribosome (mitoribosome), a dedicated translation machinery responsible for the synthesis of mitochondrial genome-encoded proteins, including at least some of the essential transmembrane subunits of the mitochondrial respiratory chain. The mitoribosomes are attached to the mitochondrial inner membrane and translation products are cotranslationally integrated into the membrane. This is Small ribosomal subunit protein uS2m (MRP4) from Saccharomyces cerevisiae (strain ATCC 204508 / S288c) (Baker's yeast).